A 372-amino-acid polypeptide reads, in one-letter code: N-methyl-L-tryptophan oxidase (372 aa).

Asp-4–His-34 lines the FAD pocket. An S-8alpha-FAD cysteine modification is found at Cys-307.

This sequence belongs to the MSOX/MTOX family. MTOX subfamily. In terms of assembly, monomer. The cofactor is FAD.

The enzyme catalyses N(alpha)-methyl-L-tryptophan + O2 + H2O = L-tryptophan + formaldehyde + H2O2. Catalyzes the oxidative demethylation of N-methyl-L-tryptophan. The protein is N-methyl-L-tryptophan oxidase of Salmonella agona (strain SL483).